The chain runs to 111 residues: uncharacterized protein (111 aa).

Its subcellular location is the cytoplasm. The protein resides in the nucleus. This is an uncharacterized protein from Saccharomyces cerevisiae (strain ATCC 204508 / S288c) (Baker's yeast).